A 344-amino-acid chain; its full sequence is Nicotinate-nucleotide--dimethylbenzimidazole phosphoribosyltransferase (344 aa).

Residue Glu-310 is the Proton acceptor of the active site.

Belongs to the CobT family.

The enzyme catalyses 5,6-dimethylbenzimidazole + nicotinate beta-D-ribonucleotide = alpha-ribazole 5'-phosphate + nicotinate + H(+). Its pathway is nucleoside biosynthesis; alpha-ribazole biosynthesis; alpha-ribazole from 5,6-dimethylbenzimidazole: step 1/2. Its function is as follows. Catalyzes the synthesis of alpha-ribazole-5'-phosphate from nicotinate mononucleotide (NAMN) and 5,6-dimethylbenzimidazole (DMB). This chain is Nicotinate-nucleotide--dimethylbenzimidazole phosphoribosyltransferase, found in Shewanella amazonensis (strain ATCC BAA-1098 / SB2B).